Consider the following 910-residue polypeptide: Protein translocase subunit SecA (910 aa).

Residues Gln86, 104–108, and Asp508 contribute to the ATP site; that span reads GEGKT. Zn(2+) contacts are provided by Cys894, Cys896, Cys905, and Cys906.

It belongs to the SecA family. In terms of assembly, monomer and homodimer. Part of the essential Sec protein translocation apparatus which comprises SecA, SecYEG and auxiliary proteins SecDF. Other proteins may also be involved. The cofactor is Zn(2+).

It localises to the cell membrane. The protein localises to the cytoplasm. It catalyses the reaction ATP + H2O + cellular proteinSide 1 = ADP + phosphate + cellular proteinSide 2.. Functionally, part of the Sec protein translocase complex. Interacts with the SecYEG preprotein conducting channel. Has a central role in coupling the hydrolysis of ATP to the transfer of proteins into and across the cell membrane, serving as an ATP-driven molecular motor driving the stepwise translocation of polypeptide chains across the membrane. In Acetivibrio thermocellus (strain ATCC 27405 / DSM 1237 / JCM 9322 / NBRC 103400 / NCIMB 10682 / NRRL B-4536 / VPI 7372) (Clostridium thermocellum), this protein is Protein translocase subunit SecA.